The sequence spans 263 residues: Purine nucleoside phosphorylase SAS1121 (263 aa).

His79, Cys124, and His141 together coordinate Zn(2+).

Belongs to the purine nucleoside phosphorylase YfiH/LACC1 family. Homodimer. The cofactor is Cu(2+). Zn(2+) is required as a cofactor.

It catalyses the reaction adenosine + phosphate = alpha-D-ribose 1-phosphate + adenine. It carries out the reaction S-methyl-5'-thioadenosine + phosphate = 5-(methylsulfanyl)-alpha-D-ribose 1-phosphate + adenine. The catalysed reaction is inosine + phosphate = alpha-D-ribose 1-phosphate + hypoxanthine. The enzyme catalyses adenosine + H2O + H(+) = inosine + NH4(+). Its function is as follows. Purine nucleoside enzyme that catalyzes the phosphorolysis of adenosine and inosine nucleosides, yielding D-ribose 1-phosphate and the respective free bases, adenine and hypoxanthine. Also catalyzes the phosphorolysis of S-methyl-5'-thioadenosine into adenine and S-methyl-5-thio-alpha-D-ribose 1-phosphate. Also has adenosine deaminase activity. This Staphylococcus aureus (strain MSSA476) protein is Purine nucleoside phosphorylase SAS1121.